We begin with the raw amino-acid sequence, 550 residues long: Alkaline phosphatase PhoV (550 aa).

A signal peptide spans 1–20; sequence MKIKLLCISLAVLFCSSANA. Zn(2+) contacts are provided by Asp48 and Thr89. Thr89 acts as the Phosphothreonine intermediate in catalysis. Substrate is bound by residues Asn110 and 171-173; that span reads KDR. The Zn(2+) site is built by Asp313, His317, Asp360, His361, and His491.

Zn(2+) serves as cofactor.

The protein resides in the cell inner membrane. It carries out the reaction a phosphate monoester + H2O = an alcohol + phosphate. With respect to regulation, subject to competitive inhibition by phosphate. Inhibited by manganese. Magnesium mildly increases enzyme activity when the zinc concentration is suboptimal. Optimal activity is dependent on the presence of 0.01-2% Triton X-100. Triton X-100 at a concentration of 0.05% increases the activity about fivefold relative to that in its absence. The enzyme is even active in Triton X-100 concentrations up to 80%. 50% inhibition by 4 mM EDTA and 50% inhibition by 48 mM sodium citrate. Alkaline phosphatase with broad substrate specificity. In Synechococcus elongatus (strain ATCC 33912 / PCC 7942 / FACHB-805) (Anacystis nidulans R2), this protein is Alkaline phosphatase PhoV.